A 383-amino-acid polypeptide reads, in one-letter code: Protein pelota homolog (383 aa).

It belongs to the eukaryotic release factor 1 family. Pelota subfamily. Component of the Pelota-HBS1L complex, also named Dom34-Hbs1 complex, composed of PELO and HBS1L. A divalent metal cation serves as cofactor.

It is found in the cytoplasm. Its function is as follows. Component of the Pelota-HBS1L complex, a complex that recognizes stalled ribosomes and triggers the No-Go Decay (NGD) pathway. In the Pelota-HBS1L complex, PELO recognizes ribosomes stalled at the 3' end of an mRNA and engages stalled ribosomes by destabilizing mRNA in the mRNA channel. Following mRNA extraction from stalled ribosomes by the SKI complex, the Pelota-HBS1L complex promotes recruitment of ABCE1, which drives the disassembly of stalled ribosomes, followed by degradation of damaged mRNAs as part of the NGD pathway. This is Protein pelota homolog (pelo) from Xenopus laevis (African clawed frog).